Consider the following 699-residue polypeptide: Elongation factor G 2 (699 aa).

In terms of domain architecture, tr-type G spans 8-290 (ERYRNIGICA…AVIEYLPSPT (283 aa)). GTP is bound by residues 17 to 24 (AHVDAGKT), 88 to 92 (DTPGH), and 142 to 145 (NKMD).

The protein belongs to the TRAFAC class translation factor GTPase superfamily. Classic translation factor GTPase family. EF-G/EF-2 subfamily.

It localises to the cytoplasm. Catalyzes the GTP-dependent ribosomal translocation step during translation elongation. During this step, the ribosome changes from the pre-translocational (PRE) to the post-translocational (POST) state as the newly formed A-site-bound peptidyl-tRNA and P-site-bound deacylated tRNA move to the P and E sites, respectively. Catalyzes the coordinated movement of the two tRNA molecules, the mRNA and conformational changes in the ribosome. The chain is Elongation factor G 2 from Colwellia psychrerythraea (strain 34H / ATCC BAA-681) (Vibrio psychroerythus).